The chain runs to 42 residues: uncharacterized protein (42 aa).

The tract at residues 20–42 (RSGRAERGVRAHSPAWSERPTPN) is disordered.

This is an uncharacterized protein from Escherichia coli.